We begin with the raw amino-acid sequence, 615 residues long: UvrABC system protein C (615 aa).

In terms of domain architecture, GIY-YIG spans 14–91 (TSPGCYIHKD…IKENKPKYNI (78 aa)). In terms of domain architecture, UVR spans 196–231 (NKIIDELKGKMAAAAQTMEFERAAEYRDLIQAIGTL).

The protein belongs to the UvrC family. As to quaternary structure, interacts with UvrB in an incision complex.

Its subcellular location is the cytoplasm. Its function is as follows. The UvrABC repair system catalyzes the recognition and processing of DNA lesions. UvrC both incises the 5' and 3' sides of the lesion. The N-terminal half is responsible for the 3' incision and the C-terminal half is responsible for the 5' incision. In Streptococcus pneumoniae serotype 19F (strain G54), this protein is UvrABC system protein C.